The sequence spans 101 residues: Urease subunit beta (101 aa).

The protein belongs to the urease beta subunit family. Heterotrimer of UreA (gamma), UreB (beta) and UreC (alpha) subunits. Three heterotrimers associate to form the active enzyme.

It localises to the cytoplasm. It catalyses the reaction urea + 2 H2O + H(+) = hydrogencarbonate + 2 NH4(+). The protein operates within nitrogen metabolism; urea degradation; CO(2) and NH(3) from urea (urease route): step 1/1. The polypeptide is Urease subunit beta (Ruegeria sp. (strain TM1040) (Silicibacter sp.)).